Consider the following 183-residue polypeptide: MKQLLEFIPLILFFTVYKLYGVQQAAITLVIATVIQLIVLKVLYKKIEKSQWIMGIFVVFFGILTAYFNDLNFLKWKVTIINGLFAAVLLVSQFVFKKPIIQMLLGKELELPTNVWNRLNLGWAGFFIICMLLNIVISYYFSDDVWATFKTFGFTGLSLIAAIATGVYLYPHLKNVENTNEQA.

5 helical membrane passes run 19-39 (LYGV…QLIV), 53-73 (IMGI…DLNF), 76-96 (WKVT…QFVF), 121-141 (LGWA…SYYF), and 151-171 (TFGF…YLYP).

Belongs to the YciB family.

The protein resides in the cell inner membrane. Its function is as follows. Plays a role in cell envelope biogenesis, maintenance of cell envelope integrity and membrane homeostasis. The protein is Inner membrane-spanning protein YciB of Actinobacillus pleuropneumoniae serotype 3 (strain JL03).